The chain runs to 310 residues: Ribosomal RNA small subunit methyltransferase H (310 aa).

S-adenosyl-L-methionine-binding positions include 32–34 (GGH), aspartate 52, phenylalanine 79, aspartate 100, and glutamine 107.

The protein belongs to the methyltransferase superfamily. RsmH family.

It is found in the cytoplasm. The enzyme catalyses cytidine(1402) in 16S rRNA + S-adenosyl-L-methionine = N(4)-methylcytidine(1402) in 16S rRNA + S-adenosyl-L-homocysteine + H(+). Its function is as follows. Specifically methylates the N4 position of cytidine in position 1402 (C1402) of 16S rRNA. In Bacillus cereus (strain AH187), this protein is Ribosomal RNA small subunit methyltransferase H.